A 131-amino-acid chain; its full sequence is Fumarate reductase subunit C (131 aa).

Transmembrane regions (helical) follow at residues 30-50, 63-83, and 109-129; these read EGTAVPAVWFSIELIFGLFAL, FLQNPVIVIINLITLAAALLH, and IIKSLWAVTVVATIVILFVAL.

Belongs to the FrdC family. As to quaternary structure, part of an enzyme complex containing four subunits: a flavoprotein (FrdA), an iron-sulfur protein (FrdB), and two hydrophobic anchor proteins (FrdC and FrdD).

It localises to the cell inner membrane. Its function is as follows. Two distinct, membrane-bound, FAD-containing enzymes are responsible for the catalysis of fumarate and succinate interconversion; fumarate reductase is used in anaerobic growth, and succinate dehydrogenase is used in aerobic growth. Anchors the catalytic components of the fumarate reductase complex to the cell inner membrane, binds quinones. This Shigella boydii serotype 18 (strain CDC 3083-94 / BS512) protein is Fumarate reductase subunit C.